The sequence spans 256 residues: Pimeloyl-[acyl-carrier protein] methyl ester esterase (256 aa).

The 228-residue stretch at 15-242 (HLVLLHGWGL…AAHAPFISHP (228 aa)) folds into the AB hydrolase-1 domain. Residues tryptophan 22, 82–83 (SL), and 143–147 (FLALQ) each bind substrate. Serine 82 acts as the Nucleophile in catalysis. Active-site residues include aspartate 207 and histidine 235. Position 235 (histidine 235) interacts with substrate.

Belongs to the AB hydrolase superfamily. Carboxylesterase BioH family. Monomer.

It localises to the cytoplasm. It catalyses the reaction 6-carboxyhexanoyl-[ACP] methyl ester + H2O = 6-carboxyhexanoyl-[ACP] + methanol + H(+). The protein operates within cofactor biosynthesis; biotin biosynthesis. The physiological role of BioH is to remove the methyl group introduced by BioC when the pimeloyl moiety is complete. It allows to synthesize pimeloyl-ACP via the fatty acid synthetic pathway through the hydrolysis of the ester bonds of pimeloyl-ACP esters. This Escherichia coli (strain 55989 / EAEC) protein is Pimeloyl-[acyl-carrier protein] methyl ester esterase.